The primary structure comprises 120 residues: Glutamate--tRNA ligase (120 aa).

Belongs to the class-I aminoacyl-tRNA synthetase family. Glutamate--tRNA ligase type 1 subfamily. Monomer.

It is found in the cytoplasm. The enzyme catalyses tRNA(Glu) + L-glutamate + ATP = L-glutamyl-tRNA(Glu) + AMP + diphosphate. Catalyzes the attachment of glutamate to tRNA(Glu) in a two-step reaction: glutamate is first activated by ATP to form Glu-AMP and then transferred to the acceptor end of tRNA(Glu). The sequence is that of Glutamate--tRNA ligase (gltX) from Staphylococcus xylosus.